The following is a 327-amino-acid chain: DNA repair and recombination protein RadA (327 aa).

ATP is bound at residue 113-120; sequence GEFGSGKS.

Belongs to the eukaryotic RecA-like protein family.

In terms of biological role, involved in DNA repair and in homologous recombination. Binds and assemble on single-stranded DNA to form a nucleoprotein filament. Hydrolyzes ATP in a ssDNA-dependent manner and promotes DNA strand exchange between homologous DNA molecules. This chain is DNA repair and recombination protein RadA, found in Ignicoccus hospitalis (strain KIN4/I / DSM 18386 / JCM 14125).